A 97-amino-acid polypeptide reads, in one-letter code: Co-chaperonin GroES (97 aa).

Belongs to the GroES chaperonin family. Heptamer of 7 subunits arranged in a ring. Interacts with the chaperonin GroEL.

It is found in the cytoplasm. In terms of biological role, together with the chaperonin GroEL, plays an essential role in assisting protein folding. The GroEL-GroES system forms a nano-cage that allows encapsulation of the non-native substrate proteins and provides a physical environment optimized to promote and accelerate protein folding. GroES binds to the apical surface of the GroEL ring, thereby capping the opening of the GroEL channel. The sequence is that of Co-chaperonin GroES from Oleispira antarctica.